Reading from the N-terminus, the 339-residue chain is UPF0324 membrane protein M6_Spy0799 (339 aa).

Helical transmembrane passes span 7–24 (KLPGLLLCLLLALPAWYL), 28–50 (FPIIGAPVFAILLGMLLALFYEH), 57–79 (GISFTSKYILQTAVVLLGFGLNL), 84–106 (AVGMQSLPIIISTIATALLVAYG), 118–140 (ATLVGVGSSICGGSAIAATAPVI), 150–172 (AISVIFLFNMLAALLFPSLGQLL), 256–275 (FILFFLLASLITTLMISLGV), 290–307 (FIVMAMAAIGLNTNLVKL), and 314–336 (AILLGAICWVAITLVSLAMQLSL).

It belongs to the UPF0324 family.

It localises to the cell membrane. The sequence is that of UPF0324 membrane protein M6_Spy0799 from Streptococcus pyogenes serotype M6 (strain ATCC BAA-946 / MGAS10394).